The primary structure comprises 491 residues: Aspartyl/glutamyl-tRNA(Asn/Gln) amidotransferase subunit B (491 aa).

The protein belongs to the GatB/GatE family. GatB subfamily. Heterotrimer of A, B and C subunits.

It carries out the reaction L-glutamyl-tRNA(Gln) + L-glutamine + ATP + H2O = L-glutaminyl-tRNA(Gln) + L-glutamate + ADP + phosphate + H(+). The catalysed reaction is L-aspartyl-tRNA(Asn) + L-glutamine + ATP + H2O = L-asparaginyl-tRNA(Asn) + L-glutamate + ADP + phosphate + 2 H(+). Its function is as follows. Allows the formation of correctly charged Asn-tRNA(Asn) or Gln-tRNA(Gln) through the transamidation of misacylated Asp-tRNA(Asn) or Glu-tRNA(Gln) in organisms which lack either or both of asparaginyl-tRNA or glutaminyl-tRNA synthetases. The reaction takes place in the presence of glutamine and ATP through an activated phospho-Asp-tRNA(Asn) or phospho-Glu-tRNA(Gln). This chain is Aspartyl/glutamyl-tRNA(Asn/Gln) amidotransferase subunit B, found in Paraburkholderia xenovorans (strain LB400).